Consider the following 166-residue polypeptide: Flagellar protein LafL (166 aa).

Residues 6–26 (MIAMFIAMIITSALVSAATIM) traverse the membrane as a helical segment.

This sequence belongs to the FliL family.

The protein resides in the cell inner membrane. Controls the rotational direction of flagella during chemotaxis. The sequence is that of Flagellar protein LafL (lafL) from Vibrio parahaemolyticus serotype O3:K6 (strain RIMD 2210633).